The primary structure comprises 825 residues: NT-3 growth factor receptor (825 aa).

An N-terminal signal peptide occupies residues 1–31 (MDVSLCPAKCSFWRIFLLGSVWLDYVGSVLA). Cystine bridges form between cysteine 32–cysteine 38 and cysteine 36–cysteine 45. The Extracellular portion of the chain corresponds to 32–429 (CPANCVCSKT…TVTHKPEEDT (398 aa)). Asparagine 68, asparagine 72, and asparagine 79 each carry an N-linked (GlcNAc...) asparagine glycan. LRR repeat units follow at residues 104–125 (GLQKLTIRNSGLRSIQPRAFAK) and 128–149 (HLRYINLSSNRLTTLSWQLFQT). 2 N-linked (GlcNAc...) asparagine glycosylation sites follow: asparagine 133 and asparagine 163. The LRRCT domain maps to 160–209 (NFFNCSCDIRWMQLWQEQGEAKLNNQNLYCINADGSQLPLFRMNISQCDL). Disulfide bonds link cysteine 164–cysteine 189 and cysteine 166–cysteine 207. Residues asparagine 203, asparagine 218, asparagine 232, asparagine 259, asparagine 267, asparagine 272, and asparagine 294 are each glycosylated (N-linked (GlcNAc...) asparagine). Ig-like C2-type domains follow at residues 210 to 300 (PEIS…VALT) and 309 to 382 (SLEE…IAKN). Cysteine 231 and cysteine 284 are joined by a disulfide. An intrachain disulfide couples cysteine 320 to cysteine 362. Asparagine 375 and asparagine 388 each carry an N-linked (GlcNAc...) asparagine glycan. A helical membrane pass occupies residues 430 to 453 (FGVSIAVGLAAFACVLLVVLFIMI). Topologically, residues 454-825 (NKYGRRSKFG…ATPIYLDILG (372 aa)) are cytoplasmic. Serine 493 is modified (phosphoserine). Tyrosine 516 is modified (phosphotyrosine; by autocatalysis). One can recognise a Protein kinase domain in the interval 538–825 (IVLKRELGEG…ATPIYLDILG (288 aa)). ATP contacts are provided by residues 544–552 (LGEGAFGKV) and lysine 572. Catalysis depends on aspartate 679, which acts as the Proton acceptor. Tyrosine 705, tyrosine 709, and tyrosine 710 each carry phosphotyrosine; by autocatalysis.

This sequence belongs to the protein kinase superfamily. Tyr protein kinase family. Insulin receptor subfamily. As to quaternary structure, exists in a dynamic equilibrium between monomeric (low affinity) and dimeric (high affinity) structures. Binds SH2B2. Interacts with SQSTM1 and KIDINS220. Interacts with PTPRS. Interacts with MAPK8IP3/JIP3. In terms of processing, ligand-mediated auto-phosphorylation.

The protein resides in the membrane. The enzyme catalyses L-tyrosyl-[protein] + ATP = O-phospho-L-tyrosyl-[protein] + ADP + H(+). Its function is as follows. Receptor tyrosine kinase involved in nervous system and probably heart development. Upon binding of its ligand NTF3/neurotrophin-3, NTRK3 autophosphorylates and activates different signaling pathways, including the phosphatidylinositol 3-kinase/AKT and the MAPK pathways, that control cell survival and differentiation. The chain is NT-3 growth factor receptor (NTRK3) from Macaca fascicularis (Crab-eating macaque).